The primary structure comprises 252 residues: Geranylgeranylglyceryl phosphate synthase (252 aa).

Residues Asp25 and Ser54 each coordinate Mg(2+). Residues 174–180, 205–206, and 227–228 each bind sn-glycerol 1-phosphate; these read FMDAGSG, GG, and GN.

The protein belongs to the GGGP/HepGP synthase family. Group II subfamily. In terms of assembly, homohexamer. Mg(2+) serves as cofactor.

It catalyses the reaction sn-glycerol 1-phosphate + (2E,6E,10E)-geranylgeranyl diphosphate = sn-3-O-(geranylgeranyl)glycerol 1-phosphate + diphosphate. Functionally, prenyltransferase that catalyzes the transfer of the geranylgeranyl moiety of geranylgeranyl diphosphate (GGPP) to the C3 hydroxyl of sn-glycerol-1-phosphate (G1P). This Chitinophaga pinensis (strain ATCC 43595 / DSM 2588 / LMG 13176 / NBRC 15968 / NCIMB 11800 / UQM 2034) protein is Geranylgeranylglyceryl phosphate synthase.